Reading from the N-terminus, the 225-residue chain is 7-cyano-7-deazaguanine synthase (225 aa).

Residue 9-19 (YSGGLDSTTCL) coordinates ATP. Zn(2+) is bound by residues C188, C198, C201, and C204.

This sequence belongs to the QueC family. The cofactor is Zn(2+).

It carries out the reaction 7-carboxy-7-deazaguanine + NH4(+) + ATP = 7-cyano-7-deazaguanine + ADP + phosphate + H2O + H(+). Its pathway is purine metabolism; 7-cyano-7-deazaguanine biosynthesis. Its function is as follows. Catalyzes the ATP-dependent conversion of 7-carboxy-7-deazaguanine (CDG) to 7-cyano-7-deazaguanine (preQ(0)). The chain is 7-cyano-7-deazaguanine synthase from Geobacter sp. (strain M21).